Reading from the N-terminus, the 590-residue chain is MGLYFRVRKSDASARLSELKTKSGTLILPEFFPVYNPNKPVITPREMSEMGIKAIITNSYLIYRSPELREAAIERGIHSLLGFDGVVMTDSGAYQIYRYGRVDVTNSEILRFQHSIGSDIGSILDVPMSSEIGREEAESGVERTIRNAEEWASMREELSNTLWVGTPQGSIYRDLVIKCSERIRELDFDYNGVGSIKVALEKYDFVTQVDHFMSIRSILRAGKPFHFWGIGHPSTFAFFAAIGADSFDSASYSLYAEQGRYMTPHGTLLLDEIEEFPCSCPVCSSHDPKEVKAMSKEERTKLLAKHNLYISISEIKKVREAIRGEWLWELVQERSRFHPNLYFALMHLLRRYSSLLEAREPLFKSSGLQCSGPESFLRPEVVRARNRLKYIHYNGKFRRVLYGDVPLGLKYLYPFGQTICPYDEEVQDEPEDDEIITCVLSYQYEFPFPKLPAIMRRSKSTGTLREVSLEGKVIGHFRPNDGAFIPTLDGASLILSHLPYPKGRVVVKGLFSDTVARGTTVFVKFVKEADPSIRPKSEVIVVNESDELLATGKAVLSGVEYHQYHPDHPFIIIRRHVKPRSEEKPPEVDS.

Asp-90 functions as the Nucleophile in the catalytic mechanism. Asp-125 provides a ligand contact to substrate. Residues Cys-278, Cys-280, and Cys-283 each contribute to the Zn(2+) site. The PUA domain maps to 502-577 (KGRVVVKGLF…HPFIIIRRHV (76 aa)).

This sequence belongs to the archaeosine tRNA-ribosyltransferase family. It depends on Zn(2+) as a cofactor.

The catalysed reaction is guanosine(15) in tRNA + 7-cyano-7-deazaguanine = 7-cyano-7-carbaguanosine(15) in tRNA + guanine. Its pathway is tRNA modification; archaeosine-tRNA biosynthesis. Functionally, exchanges the guanine residue with 7-cyano-7-deazaguanine (preQ0) at position 15 in the dihydrouridine loop (D-loop) of archaeal tRNAs. The sequence is that of tRNA-guanine(15) transglycosylase from Korarchaeum cryptofilum (strain OPF8).